Consider the following 251-residue polypeptide: Probable metal-binding protein YrpE (251 aa).

A signal peptide spans Met-1–Ala-30. Polar residues predominate over residues Thr-25–Ala-41. The tract at residues Thr-25–Glu-72 is disordered. The span at Ser-54–Glu-72 shows a compositional bias: basic and acidic residues. Residues His-203, His-212, His-214, Glu-247, and His-251 each coordinate Zn(2+).

It belongs to the calycin superfamily. ZinT family.

This is Probable metal-binding protein YrpE (yrpE) from Bacillus subtilis (strain 168).